A 363-amino-acid polypeptide reads, in one-letter code: Chalcone synthase B (363 aa).

The active site involves Cys170.

Belongs to the thiolase-like superfamily. Chalcone/stilbene synthases family.

The catalysed reaction is (E)-4-coumaroyl-CoA + 3 malonyl-CoA + 3 H(+) = 2',4,4',6'-tetrahydroxychalcone + 3 CO2 + 4 CoA. Its pathway is secondary metabolite biosynthesis; flavonoid biosynthesis. Functionally, the primary product of this enzyme is 4,2',4',6'-tetrahydroxychalcone (also termed naringenin-chalcone or chalcone) which can under specific conditions spontaneously isomerize into naringenin. In Ipomoea nil (Japanese morning glory), this protein is Chalcone synthase B (CHSB).